A 515-amino-acid chain; its full sequence is MMRDSLGPFRTFTLLTVGLLLSLFVIKTVKHRRRYHGLPTPPHNMLLGNLGVVLAEILASPEGFFHLFCVENIRRKYNMPSVFYLDLWPILPSIMVVAEPVVAKHMTQVQPLQRERFSPNLFSPLLTAEFILAMEQKNWKKENPALNAALTSTRVNEATSLLFPSLHSLRSRLHSISQSGKQYPIKDLLISYIIEVGGVIQLGGSFDLLAETSALDPIIKQSLDMMGWNPVKRYICSKEIKQRTDCLNRVLVATVQNTVQTGESGMMSQSPIYLAHVEQLASGRMDHAESIAYLVNTMKVIILASVVTAGAASYCYLFLHKYPDCLREMREEHDRVFSPDRTQTWELLQKEPHRINSLHFTLAVVKETLRLIGVGGVFKKLKTEEFLETEGNVYPVVCNVAFICHLAMGRRADLFPDPDAFRPHRFLPGANPPIPADSFRPFEKGQLSCPGQTLALKSLVLLLLTTSREFDLVPVFPKGAPRAAEYLGGEGYPEFHIGPHVNKGMPVMVHTRVDA.

4 helical membrane passes run 6-26 (LGPF…LFVI), 50-70 (LGVV…LFCV), 82-102 (VFYL…EPVV), and 300-320 (VIIL…LFLH). C449 provides a ligand contact to heme.

It belongs to the cytochrome P450 family. Requires heme as cofactor.

Its subcellular location is the membrane. It functions in the pathway secondary metabolite biosynthesis. In terms of biological role, cytochrome P450 monooxygenase; part of the gene cluster that mediates the biosynthesis of the indole diterpenes penitrems. The geranylgeranyl diphosphate (GGPP) synthase ptmG catalyzes the first step in penitrem biosynthesis via conversion of farnesyl pyrophosphate and isopentyl pyrophosphate into geranylgeranyl pyrophosphate (GGPP). Condensation of indole-3-glycerol phosphate with GGPP by the prenyl transferase ptmC then forms 3-geranylgeranylindole (3-GGI). Epoxidation by the FAD-dependent monooxygenase ptmM leads to a epoxidized-GGI that is substrate of the terpene cyclase ptmB for cyclization to yield paspaline. Paspaline is subsequently converted to 13-desoxypaxilline by the cytochrome P450 monooxygenase ptmP, the latter being then converted to paxilline by the cytochrome P450 monooxygenase ptmQ. Paxilline is converted to beta-paxitriol via C-10 ketoreduction by the short-chain dehydrogenase ptmH which can be monoprenylated at the C-20 by the indole diterpene prenyltransferase ptmD. A two-step elimination (acetylation and elimination) process performed by the O-acetyltransferase ptmV and ptmI leads to the production of the prenylated form of penijanthine. The FAD-linked oxidoreductase ptmO then converts the prenylated form of penijanthine into PC-M5 which is in turn transformed into PC-M4 by the aromatic dimethylallyltransferase ptmE. Five sequential oxidative transformations performed by the cytochrome P450 monooxygenases ptmK, ptmU, ptmL, ptmN and ptmJ yield the various penitrem compounds. PtmK, ptmU and ptmM are involved in the formation of the key bicyclic ring of penitrem C via the formation of the intermediates secopenitrem D and penitrem D. PtmL catalyzes the epoxidation of penitrem D and C to yield penitrem B and F, respectively. PtmJ catalyzes the last benzylic hydroxylation to convert penitrem B to prenitrem E and penitrem F to penitrem A. This is Cytochrome P450 monooxygenase ptmJ from Penicillium ochrochloron.